Consider the following 257-residue polypeptide: Adenosylcobinamide-GDP ribazoletransferase (257 aa).

Transmembrane regions (helical) follow at residues 28-48 (FARS…LVAL), 50-70 (LFVP…VYAV), 110-130 (VALA…VEVA), and 199-219 (WPQV…AALV).

It belongs to the CobS family. Requires Mg(2+) as cofactor.

It localises to the cell membrane. It carries out the reaction alpha-ribazole + adenosylcob(III)inamide-GDP = adenosylcob(III)alamin + GMP + H(+). The catalysed reaction is alpha-ribazole 5'-phosphate + adenosylcob(III)inamide-GDP = adenosylcob(III)alamin 5'-phosphate + GMP + H(+). The protein operates within cofactor biosynthesis; adenosylcobalamin biosynthesis; adenosylcobalamin from cob(II)yrinate a,c-diamide: step 7/7. In terms of biological role, joins adenosylcobinamide-GDP and alpha-ribazole to generate adenosylcobalamin (Ado-cobalamin). Also synthesizes adenosylcobalamin 5'-phosphate from adenosylcobinamide-GDP and alpha-ribazole 5'-phosphate. The chain is Adenosylcobinamide-GDP ribazoletransferase from Halorubrum lacusprofundi (strain ATCC 49239 / DSM 5036 / JCM 8891 / ACAM 34).